The primary structure comprises 381 residues: Early boundary activity protein 2 (381 aa).

Residues 210–245 (NDAEDVPAPPSKRPRHMSTSSSESHIPDTASEKDEK) form a disordered region. The BEN domain maps to 268–365 (PNGTQITAHQ…TKCADTAKKY (98 aa)).

As to quaternary structure, the heterotrimeric Elba complex consists of Elba1, Elba2 and Elba3.

It is found in the nucleus. Functionally, the heterotrimeric Elba complex is required for chromatin domain boundary function during early embryogenesis. It binds to a 8-bp sequence 5'-CCAATAAG-3' in the Fab-7 insulator or boundary element in the bithorax complex and contributes to its insulator or boundary activity. Elba2 can act as a transcriptional repressor and binds the palindromic sequence 5'-CCAATTGG-3' to mediate transcriptional repression. The protein is Early boundary activity protein 2 of Drosophila melanogaster (Fruit fly).